The sequence spans 298 residues: Cobalt-precorrin-5B C(1)-methyltransferase (298 aa).

Belongs to the CbiD family.

The enzyme catalyses Co-precorrin-5B + S-adenosyl-L-methionine = Co-precorrin-6A + S-adenosyl-L-homocysteine. It participates in cofactor biosynthesis; adenosylcobalamin biosynthesis; cob(II)yrinate a,c-diamide from sirohydrochlorin (anaerobic route): step 6/10. Its function is as follows. Catalyzes the methylation of C-1 in cobalt-precorrin-5B to form cobalt-precorrin-6A. The sequence is that of Cobalt-precorrin-5B C(1)-methyltransferase from Archaeoglobus fulgidus (strain ATCC 49558 / DSM 4304 / JCM 9628 / NBRC 100126 / VC-16).